The primary structure comprises 158 residues: Putative 4-hydroxy-4-methyl-2-oxoglutarate aldolase (158 aa).

Substrate is bound by residues 75-78 (GDLI) and R97. D98 contacts a divalent metal cation.

It belongs to the class II aldolase/RraA-like family. As to quaternary structure, homotrimer. The cofactor is a divalent metal cation.

The enzyme catalyses 4-hydroxy-4-methyl-2-oxoglutarate = 2 pyruvate. The catalysed reaction is oxaloacetate + H(+) = pyruvate + CO2. Catalyzes the aldol cleavage of 4-hydroxy-4-methyl-2-oxoglutarate (HMG) into 2 molecules of pyruvate. Also contains a secondary oxaloacetate (OAA) decarboxylase activity due to the common pyruvate enolate transition state formed following C-C bond cleavage in the retro-aldol and decarboxylation reactions. In Saccharopolyspora erythraea (strain ATCC 11635 / DSM 40517 / JCM 4748 / NBRC 13426 / NCIMB 8594 / NRRL 2338), this protein is Putative 4-hydroxy-4-methyl-2-oxoglutarate aldolase.